Consider the following 351-residue polypeptide: Nuclear inhibitor of protein phosphatase 1 (351 aa).

The interval 1 to 142 (MAAAVNSGSS…LPSAVKGDEK (142 aa)) is interaction with CDC5L, SF3B1 and MELK. The 53-residue stretch at 49–101 (YLFGRNPDLCDFTIDHQSCSRVHAALVYHKHLKRVFLIDLNSTHGTFLGHIRL) folds into the FHA domain. The tract at residues 143–224 (MGGEDDELKG…VDPSVGRFRN (82 aa)) is interaction with EED. Thr-161 carries the post-translational modification Phosphothreonine. A phosphoserine mark is found at Ser-178 and Ser-199. Short sequence motifs (nuclear localization signal) lie at residues 185–209 (GNLD…DDEI) and 210–240 (INPE…RMEG). Residues 191–200 (RPKRKRKNSR) form an involved in PP-1 inhibition region. The interval 200–203 (RVTF) is involved in PP-1 binding. Ser-204 carries the post-translational modification Phosphoserine. Phosphoserine is present on Ser-249. Tyr-264 bears the Phosphotyrosine mark. Residues 310 to 329 (AVAINPTPNPAVYNPEAVNE) form an interaction with EED region. Positions 314 to 351 (NPTPNPAVYNPEAVNEPKKKKYAKEAWPGKKPTPSLLI) are disordered. The tract at residues 330–351 (PKKKKYAKEAWPGKKPTPSLLI) is RNA-binding. Positions 331–337 (KKKKYAK) are involved in PP-1 inhibition. Tyr-335 carries the post-translational modification Phosphotyrosine.

As to quaternary structure, interacts with phosphorylated CDC5L, SF3B1 and MELK. Part of the spliceosome. Interacts with PPP1CA, PPP1CB and PPP1CC. Interacts with EED. Part of a complex consisting of PPP1R8, EED, HDAC2 and PP-1. May be inactivated by phosphorylation on Ser-199 or Ser-204.

It localises to the nucleus. It is found in the nucleus speckle. Inhibitor subunit of the major nuclear protein phosphatase-1 (PP-1). It has RNA-binding activity but does not cleave RNA and may target PP-1 to RNA-associated substrates. May also be involved in pre-mRNA splicing. Binds DNA and might act as a transcriptional repressor. Essential for cell proliferation and early embryonic development. This chain is Nuclear inhibitor of protein phosphatase 1 (Ppp1r8), found in Mus musculus (Mouse).